Reading from the N-terminus, the 555-residue chain is 6-phosphofructo-2-kinase/fructose-2,6-bisphosphatase 3 (555 aa).

The interval 1–245 (MPLELTQSRV…VYYLMNIHVQ (245 aa)) is 6-phosphofructo-2-kinase. 42–50 (GLPARGKTY) is a binding site for ATP. Arg-75 and Arg-99 together coordinate beta-D-fructose 6-phosphate. Asp-125 is an active-site residue. The beta-D-fructose 6-phosphate site is built by Thr-127 and Arg-133. Residue Cys-155 is part of the active site. 164–169 (NIMEVK) is a binding site for ATP. Beta-D-fructose 6-phosphate-binding residues include Lys-169, Arg-190, and Tyr-194. The fructose-2,6-bisphosphatase stretch occupies residues 246–555 (PRTIYLCRHG…CHIFSKFSPY (310 aa)). Beta-D-fructose 2,6-bisphosphate is bound at residue Arg-253. Residue His-254 is the Tele-phosphohistidine intermediate of the active site. Beta-D-fructose 2,6-bisphosphate contacts are provided by Asn-260 and Gly-266. The Proton donor/acceptor role is filled by Glu-323. Residues Tyr-334, Arg-348, Lys-352, Tyr-363, Gln-389, and Arg-393 each contribute to the beta-D-fructose 2,6-bisphosphate site. An ATP-binding site is contributed by 345–348 (YALR). ATP is bound by residues 389–393 (QAVLR) and Tyr-425. Residues 475 to 504 (KQDAKKGPNPLMRRNSVTPLASPEPTKKPR) form a disordered region. Ser-490 is modified (phosphoserine; by AMPK and PKA). Thr-492 bears the Phosphothreonine mark. Ser-496 is subject to Phosphoserine.

It in the C-terminal section; belongs to the phosphoglycerate mutase family. In terms of assembly, homodimer. Forms a heterodimer with PFKFB2. Phosphorylation by AMPK stimulates activity.

The catalysed reaction is beta-D-fructose 2,6-bisphosphate + H2O = beta-D-fructose 6-phosphate + phosphate. It carries out the reaction beta-D-fructose 6-phosphate + ATP = beta-D-fructose 2,6-bisphosphate + ADP + H(+). In terms of biological role, catalyzes both the synthesis and degradation of fructose 2,6-bisphosphate. This chain is 6-phosphofructo-2-kinase/fructose-2,6-bisphosphatase 3 (Pfkfb3), found in Rattus norvegicus (Rat).